The chain runs to 26 residues: Protein YsdD (26 aa).

The interval 1 to 26 (MTIDKNWLNRSNKDPGRSLRFTHQPV) is disordered.

The protein is Protein YsdD of Escherichia coli (strain K12).